Here is a 288-residue protein sequence, read N- to C-terminus: Serine/threonine-protein acetyltransferase YopJ (288 aa).

Active-site residues include histidine 109 and glutamate 128. Position 109 (histidine 109) interacts with CoA. Arginine 167 to serine 168 lines the CoA pocket. The active site involves cysteine 172. 1D-myo-inositol hexakisphosphate-binding positions include lysine 182 to isoleucine 185 and lysine 224 to histidine 225. Glutamine 227–lysine 230 is a CoA binding site. Arginine 257 contributes to the 1D-myo-inositol hexakisphosphate binding site. Aspartate 266–leucine 270 is a binding site for CoA.

Belongs to the acetyltransferase YopJ family. The cofactor is 1D-myo-inositol hexakisphosphate.

It is found in the secreted. It carries out the reaction L-threonyl-[protein] + acetyl-CoA = O-acetyl-L-threonyl-[protein] + CoA. The catalysed reaction is L-seryl-[protein] + acetyl-CoA = O-acetyl-L-seryl-[protein] + CoA. Its activity is regulated as follows. 1D-myo-inositol hexakisphosphate activates protein-acetyltransferase activity via an allosteric mechanism: 1D-myo-inositol hexakisphosphate-binding induces a conformational rearrangement that stimulates the interaction with acetyl-CoA. Serine/threonine-protein acetyltransferase translocated into infected cells, which inhibits the host immune response and induces cell death by mediating acetylation of target proteins. Inhibits the MAPK and NF-kappa-B signaling pathways by acetylating protein-kinases such as MAP2K1, MAP2K6, MAP3K7/TAK1 and I-kappa-B kinase (CHUK/IKKA and IKBKB) on serine and threonine residues critical for their activation by phosphorylation, thereby preventing protein-kinase activation. Promotes pyroptosis, a programmed cell death, in host cells by mediating acetylation of MAP3K7/TAK1: MAP3K7/TAK1 inactivation triggers activation of caspase-8 (CASP8), followed by CASP8-dependent cleavage of gasdermin-D (GSDMD) and induction of pyroptosis. The polypeptide is Serine/threonine-protein acetyltransferase YopJ (Yersinia pestis).